The sequence spans 160 residues: Cytochrome b6-f complex subunit 4 (160 aa).

3 helical membrane-spanning segments follow: residues 36 to 56 (LLYVFPVVILGTIGLVTALAV), 95 to 115 (LLGIACQAAIPLGLMLVPFIE), and 131 to 151 (AVFLFGTVVTLWLGAGATFPI).

The protein belongs to the cytochrome b family. PetD subfamily. The 4 large subunits of the cytochrome b6-f complex are cytochrome b6, subunit IV (17 kDa polypeptide, PetD), cytochrome f and the Rieske protein, while the 4 small subunits are PetG, PetL, PetM and PetN. The complex functions as a dimer.

The protein resides in the cellular thylakoid membrane. In terms of biological role, component of the cytochrome b6-f complex, which mediates electron transfer between photosystem II (PSII) and photosystem I (PSI), cyclic electron flow around PSI, and state transitions. This is Cytochrome b6-f complex subunit 4 from Rippkaea orientalis (strain PCC 8801 / RF-1) (Cyanothece sp. (strain PCC 8801)).